A 671-amino-acid chain; its full sequence is cGMP-dependent protein kinase 1 (671 aa).

At Ser2 the chain carries N-acetylserine. Positions 2–59 (SELEEDFAKILMLKEERIKELEKRLSEKEEEIQELKRKLHKCQSVLPVPSTHIGPRTT) form a coiled coil. Residues 2 to 102 (SELEEDFAKI…LIKEAILDND (101 aa)) form a required for dimerization region. Residues 9-44 (AKILMLKEERIKELEKRLSEKEEEIQELKRKLHKCQ) are leucine-zipper. The autoinhibitory domain stretch occupies residues 50 to 75 (PSTHIGPRTTRAQGISAEPQTYRSFH). Position 59 is a phosphothreonine; by autocatalysis (Thr59). Residues 103 to 220 (FMKNLELSQI…EYMEFLKSVP (118 aa)) form a cGMP-binding, high affinity region. 3',5'-cyclic AMP-binding positions include 167–170 (GELA) and 177–178 (RT). Residues 167–170 (GELA), 177–178 (RT), Arg282, 291–294 (GEKA), 301–302 (RT), and Tyr336 each bind 3',5'-cyclic GMP. The tract at residues 221-341 (TFQSLPEEIL…SNKAYEDAEA (121 aa)) is cGMP-binding, low affinity. 3',5'-cyclic AMP is bound by residues 291–294 (GEKA), 301–302 (RT), and Tyr336. Positions 360–619 (FNIIDTLGVG…VKDIQKHKWF (260 aa)) constitute a Protein kinase domain. ATP is bound by residues 366–374 (LGVGGFGRV) and Lys390. Asp484 functions as the Proton acceptor in the catalytic mechanism. Phosphothreonine is present on Thr515. An AGC-kinase C-terminal domain is found at 620 to 671 (EGFNWEGLRKGTLTPPIIPSVASPTDTSNFDSFPEDNDEPPPDDNSGWDIDF). A disordered region spans residues 635-671 (PIIPSVASPTDTSNFDSFPEDNDEPPPDDNSGWDIDF). Residues 652 to 661 (FPEDNDEPPP) are compositionally biased toward acidic residues.

It belongs to the protein kinase superfamily. AGC Ser/Thr protein kinase family. cGMP subfamily. In terms of assembly, isoform alpha: parallel homodimer or heterodimer and also heterotetramer. Interacts directly with PPP1R12A. Non-covalent dimer of dimer of PRKG1-PRKG1 and PPP1R12A-PPP1R12A. This interaction targets PRKG1 to stress fibers to mediate smooth muscle cell relaxation and vasodilation in responses to rises in cGMP. Isoform beta: antiparallel homodimer. Part of cGMP kinase signaling complex at least composed of ACTA2/alpha-actin, CNN1/calponin H1, PLN/phospholamban, PRKG1 and ITPR1. Interacts with IRAG1. Forms a stable complex with ITPR1, IRAG1, and isoform beta of PRKG1. Interacts with TRPC7 (via ankyrin repeat domain). Isoform alpha interacts with RGS2. Interacts with GTF2I. In terms of processing, autophosphorylation increases kinase activity. Post-translationally, 65 kDa monomer is produced by proteolytic cleavage. Primarily expressed in lung and placenta.

Its subcellular location is the cytoplasm. It catalyses the reaction L-seryl-[protein] + ATP = O-phospho-L-seryl-[protein] + ADP + H(+). The enzyme catalyses L-threonyl-[protein] + ATP = O-phospho-L-threonyl-[protein] + ADP + H(+). In the absence of cGMP, PRKG1 activity is suppressed by autoinhibitory contacts. Its function is as follows. Serine/threonine protein kinase that acts as a key mediator of the nitric oxide (NO)/cGMP signaling pathway. GMP binding activates PRKG1, which phosphorylates serines and threonines on many cellular proteins. Numerous protein targets for PRKG1 phosphorylation are implicated in modulating cellular calcium, but the contribution of each of these targets may vary substantially among cell types. Proteins that are phosphorylated by PRKG1 regulate platelet activation and adhesion, smooth muscle contraction, cardiac function, gene expression, feedback of the NO-signaling pathway, and other processes involved in several aspects of the CNS like axon guidance, hippocampal and cerebellar learning, circadian rhythm and nociception. Smooth muscle relaxation is mediated through lowering of intracellular free calcium, by desensitization of contractile proteins to calcium, and by decrease in the contractile state of smooth muscle or in platelet activation. Regulates intracellular calcium levels via several pathways: phosphorylates IRAG1 and inhibits IP3-induced Ca(2+) release from intracellular stores, phosphorylation of KCNMA1 (BKCa) channels decreases intracellular Ca(2+) levels, which leads to increased opening of this channel. PRKG1 phosphorylates the canonical transient receptor potential channel (TRPC) family which inactivates the associated inward calcium current. Another mode of action of NO/cGMP/PKGI signaling involves PKGI-mediated inactivation of the Ras homolog gene family member A (RhoA). Phosphorylation of RHOA by PRKG1 blocks the action of this protein in myriad processes: regulation of RHOA translocation; decreasing contraction; controlling vesicle trafficking, reduction of myosin light chain phosphorylation resulting in vasorelaxation. Activation of PRKG1 by NO signaling also alters gene expression in a number of tissues. In smooth muscle cells, increased cGMP and PRKG1 activity influence expression of smooth muscle-specific contractile proteins, levels of proteins in the NO/cGMP signaling pathway, down-regulation of the matrix proteins osteopontin and thrombospondin-1 to limit smooth muscle cell migration and phenotype. Regulates vasodilator-stimulated phosphoprotein (VASP) functions in platelets and smooth muscle. This Homo sapiens (Human) protein is cGMP-dependent protein kinase 1 (PRKG1).